The chain runs to 353 residues: Phenol 2-monooxygenase, reductase component DmpP (353 aa).

In terms of domain architecture, 2Fe-2S ferredoxin-type spans 3-93 (YNVTIEPTGE…DLVIEADVDA (91 aa)). [2Fe-2S] cluster contacts are provided by C37, C42, C45, and C77. The FAD-binding FR-type domain maps to 102-201 (VEDYRGVVSA…SGPYGQFFVR (100 aa)).

In terms of assembly, the multicomponent enzyme phenol hydroxylase is formed by DmpL (P1 component), DmpM (P2 component), DmpN (P3 component), DmpO (P4 component) and DmpP (P5 component). Requires FAD as cofactor. The cofactor is [2Fe-2S] cluster.

The enzyme catalyses phenol + NADH + O2 + H(+) = catechol + NAD(+) + H2O. It functions in the pathway aromatic compound metabolism; phenol degradation. In terms of biological role, part of a multicomponent enzyme which catalyzes the degradation of phenol and some of its methylated derivatives. DmpP probably transfers electrons from NADH, via FAD and the iron-sulfur center, to the oxygenase component of the complex. Required for growth on phenol and for in vitro phenol hydroxylase activity. The polypeptide is Phenol 2-monooxygenase, reductase component DmpP (Pseudomonas sp. (strain CF600)).